We begin with the raw amino-acid sequence, 538 residues long: Putative cysteine ligase BshC (538 aa).

Positions 460-484 (KINEQIELLERMLKRNVEKKHEVEL) form a coiled coil.

It belongs to the BshC family.

Involved in bacillithiol (BSH) biosynthesis. May catalyze the last step of the pathway, the addition of cysteine to glucosamine malate (GlcN-Mal) to generate BSH. In Bacillus cereus (strain AH820), this protein is Putative cysteine ligase BshC.